Consider the following 949-residue polypeptide: Protein translocase subunit SecA 1 (949 aa).

ATP-binding positions include glutamine 86, glycine 104 to threonine 108, and aspartate 493. The interval valine 869–arginine 949 is disordered. The span at serine 925–arginine 934 shows a compositional bias: basic and acidic residues.

The protein belongs to the SecA family. In terms of assembly, monomer and homodimer. Part of the essential Sec protein translocation apparatus which comprises SecA, SecYEG and auxiliary proteins SecDF. Other proteins may also be involved.

It localises to the cell membrane. Its subcellular location is the cytoplasm. It carries out the reaction ATP + H2O + cellular proteinSide 1 = ADP + phosphate + cellular proteinSide 2.. In terms of biological role, part of the Sec protein translocase complex. Interacts with the SecYEG preprotein conducting channel. Has a central role in coupling the hydrolysis of ATP to the transfer of proteins into and across the cell membrane, serving as an ATP-driven molecular motor driving the stepwise translocation of polypeptide chains across the membrane. The chain is Protein translocase subunit SecA 1 from Mycobacterium bovis (strain ATCC BAA-935 / AF2122/97).